Consider the following 20-residue polypeptide: T cell receptor alpha joining 42 (20 aa).

Residues 1-20 form a disordered region; that stretch reads YGGSQGNLIFGKGTKLSVKP.

Alpha-beta TR is a heterodimer composed of an alpha and beta chain; disulfide-linked. The alpha-beta TR is associated with the transmembrane signaling CD3 coreceptor proteins to form the TR-CD3 (TcR or TCR). The assembly of alpha-beta TR heterodimers with CD3 occurs in the endoplasmic reticulum where a single alpha-beta TR heterodimer associates with one CD3D-CD3E heterodimer, one CD3G-CD3E heterodimer and one CD247 homodimer forming a stable octameric structure. CD3D-CD3E and CD3G-CD3E heterodimers preferentially associate with TR alpha and TR beta chains, respectively. The association of the CD247 homodimer is the last step of TcR assembly in the endoplasmic reticulum and is required for transport to the cell surface.

Its subcellular location is the cell membrane. Its function is as follows. J region of the variable domain of T cell receptor (TR) alpha chain that participates in the antigen recognition. Alpha-beta T cell receptors are antigen specific receptors which are essential to the immune response and are present on the cell surface of T lymphocytes. Recognize peptide-major histocompatibility (MH) (pMH) complexes that are displayed by antigen presenting cells (APC), a prerequisite for efficient T cell adaptive immunity against pathogens. Binding of alpha-beta TR to pMH complex initiates TR-CD3 clustering on the cell surface and intracellular activation of LCK that phosphorylates the ITAM motifs of CD3G, CD3D, CD3E and CD247 enabling the recruitment of ZAP70. In turn, ZAP70 phosphorylates LAT, which recruits numerous signaling molecules to form the LAT signalosome. The LAT signalosome propagates signal branching to three major signaling pathways, the calcium, the mitogen-activated protein kinase (MAPK) kinase and the nuclear factor NF-kappa-B (NF-kB) pathways, leading to the mobilization of transcription factors that are critical for gene expression and essential for T cell growth and differentiation. The T cell repertoire is generated in the thymus, by V-(D)-J rearrangement. This repertoire is then shaped by intrathymic selection events to generate a peripheral T cell pool of self-MH restricted, non-autoaggressive T cells. Post-thymic interaction of alpha-beta TR with the pMH complexes shapes TR structural and functional avidity. This is T cell receptor alpha joining 42 from Homo sapiens (Human).